The sequence spans 150 residues: Large ribosomal subunit protein bL17 (150 aa).

Residues 126 to 150 (DRAKRREERLKAQREGRDHEEETDE) form a disordered region.

This sequence belongs to the bacterial ribosomal protein bL17 family. In terms of assembly, part of the 50S ribosomal subunit. Contacts protein L32.

This chain is Large ribosomal subunit protein bL17, found in Solibacter usitatus (strain Ellin6076).